Reading from the N-terminus, the 146-residue chain is Large ribosomal subunit protein uL14 (146 aa).

The protein belongs to the universal ribosomal protein uL14 family.

The protein is Large ribosomal subunit protein uL14 (RPL23) of Encephalitozoon cuniculi (strain GB-M1) (Microsporidian parasite).